We begin with the raw amino-acid sequence, 230 residues long: MSFKREGDDWSQLNVLKKRRVGDLLASYIPEDEALMLRDGRFACAICPHRPVLDTLAMLTAHRAGKKHLSSLQLFYGKKPPGKGTEQNPRQHNELRREETTAEAPLLTQTRLITQSALHRAPHYNSCCRRKYRPEAPRPSVSRPPLPPPEVEPQGGKISREPEPEAGSQTKESATVSSPAPMSPTRRRALDHYLTLRSSGWIPDGRGRWIKDENVEFDSDEEEPPDLPLD.

Residue Ser-2 is modified to Phosphoserine. The Bipartite nuclear localization signal motif lies at 4-20; sequence KREGDDWSQLNVLKKRR. Residues 42-74 form a Matrin-type zinc finger; that stretch reads FACAICPHRPVLDTLAMLTAHRAGKKHLSSLQL. Lys-67 participates in a covalent cross-link: Glycyl lysine isopeptide (Lys-Gly) (interchain with G-Cter in SUMO2). 2 disordered regions span residues 76 to 106 and 129 to 191; these read YGKK…EAPL and RRKY…RALD. The segment covering 89–100 has biased composition (basic and acidic residues); that stretch reads PRQHNELRREET. The segment covering 142 to 151 has biased composition (pro residues); it reads SRPPLPPPEV. Residues 167-180 show a composition bias toward polar residues; sequence GSQTKESATVSSPA. A phosphoserine mark is found at Ser-183 and Ser-219. The segment at 188–230 is required for interaction with LUC7L2; that stretch reads RALDHYLTLRSSGWIPDGRGRWIKDENVEFDSDEEEPPDLPLD.

Component of the minor spliceosome. Within this complex, interacts with RNF113A, as well as with SF3B1/SF3b155, SF3B2/SF3b145, SF3B3/SF3b130 and CDC5L. May interact with LUC7L2 and SNRNP70.

It is found in the nucleus. The protein localises to the nucleoplasm. The protein resides in the nucleus speckle. Functionally, as a component of the minor spliceosome, involved in the splicing of U12-type introns in pre-mRNAs. Plays a role in the regulation of primary cilia length and Hedgehog signaling. The polypeptide is Sodium channel modifier 1 (SCNM1) (Bos taurus (Bovine)).